A 162-amino-acid chain; its full sequence is Phosphopantetheine adenylyltransferase (162 aa).

Residue S11 coordinates substrate. Residues 11–12 (SF) and H19 contribute to the ATP site. K43, V76, and R90 together coordinate substrate. ATP is bound by residues 91-93 (GLR), E101, and 126-132 (HLYISSS).

It belongs to the bacterial CoaD family. In terms of assembly, homohexamer. Requires Mg(2+) as cofactor.

Its subcellular location is the cytoplasm. The enzyme catalyses (R)-4'-phosphopantetheine + ATP + H(+) = 3'-dephospho-CoA + diphosphate. It participates in cofactor biosynthesis; coenzyme A biosynthesis; CoA from (R)-pantothenate: step 4/5. With respect to regulation, is inhibited by a series of cycloalkyl pyrimidines, which also show suppression of bacterial growth. Its function is as follows. Reversibly transfers an adenylyl group from ATP to 4'-phosphopantetheine, yielding dephospho-CoA (dPCoA) and pyrophosphate. The protein is Phosphopantetheine adenylyltransferase of Streptococcus pneumoniae (strain ATCC BAA-255 / R6).